The chain runs to 246 residues: Probable transcriptional regulatory protein HAPS_0943 (246 aa).

The protein belongs to the TACO1 family.

The protein resides in the cytoplasm. The protein is Probable transcriptional regulatory protein HAPS_0943 of Glaesserella parasuis serovar 5 (strain SH0165) (Haemophilus parasuis).